The sequence spans 464 residues: Dihydrolipoyl dehydrogenase (464 aa).

Residues 33-41 (EPKYWGGVC), lysine 50, and glycine 113 contribute to the FAD site. Cysteine 41 and cysteine 46 are oxidised to a cystine. Residues 178 to 182 (GAGAI), glutamate 201, and 266 to 269 (AIGF) contribute to the NAD(+) site. Residues aspartate 309 and alanine 317 each coordinate FAD. Histidine 443 functions as the Proton acceptor in the catalytic mechanism.

The protein belongs to the class-I pyridine nucleotide-disulfide oxidoreductase family. In terms of assembly, homodimer. Part of the PDH complex, consisting of multiple copies of AceE (E1), DlaT (E2) and Lpd (E3), and of the BCKADH complex, consisting of multiple copies of BkdA/BkdB (E1), BkdC (E2) and Lpd (E3). FAD is required as a cofactor.

It is found in the cytoplasm. The catalysed reaction is N(6)-[(R)-dihydrolipoyl]-L-lysyl-[protein] + NAD(+) = N(6)-[(R)-lipoyl]-L-lysyl-[protein] + NADH + H(+). Functionally, lipoamide dehydrogenase is a component of the alpha-ketoacid dehydrogenase complexes. Catalyzes the reoxidation of dihydrolipoyl groups which are covalently attached to the lipoate acyltransferase components (E2) of the complexes. This Mycobacterium bovis (strain ATCC BAA-935 / AF2122/97) protein is Dihydrolipoyl dehydrogenase (lpd).